A 314-amino-acid chain; its full sequence is Olfactory receptor 11H7 (314 aa).

The Extracellular segment spans residues 1 to 24 (MNNSQISTVTQFVLLGFPGPWKIQ). Asn-2 carries an N-linked (GlcNAc...) asparagine glycan. Residues 25 to 45 (IIFFSMILLVYIFTLTGNMAI) traverse the membrane as a helical segment. Residues 46–57 (ICAVRWDHRLHT) are Cytoplasmic-facing. The chain crosses the membrane as a helical span at residues 58–78 (PMYVLLANFSFLEIWYVTCTV). The Extracellular segment spans residues 79 to 97 (PNMLVNFFSKTKTISFSGC). Cys-97 and Cys-179 are oxidised to a cystine. The helical transmembrane segment at 98–118 (FTQFHFFFSLGTTECFFLCVM) threads the bilayer. At 119 to 142 (AYDRYLAICHPLHYPSIMTGQLCG) the chain is on the cytoplasmic side. A helical transmembrane segment spans residues 143 to 163 (ILVSLCWLIGFLGHSISIFFI). The Extracellular segment spans residues 164–201 (FQLPFCGPNIIDHFLCDVDPLMALSSAPTHIIGHVFHS). The helical transmembrane segment at 202–222 (VSSLFINLTMVYILGSYTLVL) threads the bilayer. The Cytoplasmic portion of the chain corresponds to 223–244 (RTVLQVPSSAGWQKAISTCGSH). The helical transmembrane segment at 245 to 265 (LVVVSLFYGAIMLMYVSPTPG) threads the bilayer. The Extracellular portion of the chain corresponds to 266–271 (NSVAMH). The chain crosses the membrane as a helical span at residues 272–292 (KLITLIYSVVTPVLNPLIYSL). Residues 293-314 (RNKDMKYALHHVFCGMRIIQRS) are Cytoplasmic-facing.

This sequence belongs to the G-protein coupled receptor 1 family.

It localises to the cell membrane. In terms of biological role, odorant receptor. Activated by isovaleric acid. This is Olfactory receptor 11H7 (OR11H7) from Homo sapiens (Human).